We begin with the raw amino-acid sequence, 465 residues long: Na(+)-translocating NADH-quinone reductase subunit A (465 aa).

This sequence belongs to the NqrA family. As to quaternary structure, composed of six subunits; NqrA, NqrB, NqrC, NqrD, NqrE and NqrF.

The catalysed reaction is a ubiquinone + n Na(+)(in) + NADH + H(+) = a ubiquinol + n Na(+)(out) + NAD(+). In terms of biological role, NQR complex catalyzes the reduction of ubiquinone-1 to ubiquinol by two successive reactions, coupled with the transport of Na(+) ions from the cytoplasm to the periplasm. NqrA to NqrE are probably involved in the second step, the conversion of ubisemiquinone to ubiquinol. This Chlamydia muridarum (strain MoPn / Nigg) protein is Na(+)-translocating NADH-quinone reductase subunit A.